Consider the following 273-residue polypeptide: ATP synthase subunit a (273 aa).

Helical transmembrane passes span 42–62, 102–122, 148–168, 213–233, and 244–264; these read TLNIDSLFFSVVLGALFLFIF, VIAPLALTVFVWVFLMNMMDL, DVSITLSMALGVFILILFYSI, LFGNMYAGELIFILIAGLLPW, and AIFHILIITLQAFIFMVLTIV.

The protein belongs to the ATPase A chain family. F-type ATPases have 2 components, CF(1) - the catalytic core - and CF(0) - the membrane proton channel. CF(1) has five subunits: alpha(3), beta(3), gamma(1), delta(1), epsilon(1). CF(0) has three main subunits: a(1), b(2) and c(9-12). The alpha and beta chains form an alternating ring which encloses part of the gamma chain. CF(1) is attached to CF(0) by a central stalk formed by the gamma and epsilon chains, while a peripheral stalk is formed by the delta and b chains.

The protein resides in the cell inner membrane. Key component of the proton channel; it plays a direct role in the translocation of protons across the membrane. This Serratia proteamaculans (strain 568) protein is ATP synthase subunit a.